The chain runs to 144 residues: 3-hydroxyacyl-[acyl-carrier-protein] dehydratase FabZ (144 aa).

Residue His51 is part of the active site.

The protein belongs to the thioester dehydratase family. FabZ subfamily.

The protein resides in the cytoplasm. It carries out the reaction a (3R)-hydroxyacyl-[ACP] = a (2E)-enoyl-[ACP] + H2O. Its function is as follows. Involved in unsaturated fatty acids biosynthesis. Catalyzes the dehydration of short chain beta-hydroxyacyl-ACPs and long chain saturated and unsaturated beta-hydroxyacyl-ACPs. This Clostridium botulinum (strain Loch Maree / Type A3) protein is 3-hydroxyacyl-[acyl-carrier-protein] dehydratase FabZ.